The chain runs to 418 residues: Ciliary microtubule-associated protein 2 (418 aa).

Sperm.

In Homo sapiens (Human), this protein is Ciliary microtubule-associated protein 2.